Here is a 145-residue protein sequence, read N- to C-terminus: Large ribosomal subunit protein uL16 (145 aa).

It belongs to the universal ribosomal protein uL16 family. As to quaternary structure, part of the 50S ribosomal subunit.

Its function is as follows. Binds 23S rRNA and is also seen to make contacts with the A and possibly P site tRNAs. This is Large ribosomal subunit protein uL16 from Desulfitobacterium hafniense (strain DSM 10664 / DCB-2).